Consider the following 366-residue polypeptide: Glutamate 5-kinase (366 aa).

ATP is bound at residue K17. Substrate is bound by residues S57, D144, and N156. Residues S176–D177 and T216–K222 each bind ATP. A PUA domain is found at Q278–E352.

It belongs to the glutamate 5-kinase family.

It is found in the cytoplasm. The enzyme catalyses L-glutamate + ATP = L-glutamyl 5-phosphate + ADP. The protein operates within amino-acid biosynthesis; L-proline biosynthesis; L-glutamate 5-semialdehyde from L-glutamate: step 1/2. Functionally, catalyzes the transfer of a phosphate group to glutamate to form L-glutamate 5-phosphate. In Rhodococcus jostii (strain RHA1), this protein is Glutamate 5-kinase.